A 438-amino-acid chain; its full sequence is Histidinol dehydrogenase (438 aa).

NAD(+) contacts are provided by Y138, Q199, and N222. Substrate-binding residues include S245, Q267, and H270. Zn(2+)-binding residues include Q267 and H270. Residues E335 and H336 each act as proton acceptor in the active site. Substrate-binding residues include H336, D369, E423, and H428. Zn(2+) is bound at residue D369. H428 lines the Zn(2+) pocket.

It belongs to the histidinol dehydrogenase family. Requires Zn(2+) as cofactor.

The enzyme catalyses L-histidinol + 2 NAD(+) + H2O = L-histidine + 2 NADH + 3 H(+). It participates in amino-acid biosynthesis; L-histidine biosynthesis; L-histidine from 5-phospho-alpha-D-ribose 1-diphosphate: step 9/9. Catalyzes the sequential NAD-dependent oxidations of L-histidinol to L-histidinaldehyde and then to L-histidine. The chain is Histidinol dehydrogenase from Burkholderia lata (strain ATCC 17760 / DSM 23089 / LMG 22485 / NCIMB 9086 / R18194 / 383).